The chain runs to 483 residues: NADH-quinone oxidoreductase subunit N (483 aa).

14 consecutive transmembrane segments (helical) span residues 13–33, 39–57, 76–96, 110–130, 131–151, 165–185, 206–226, 240–260, 277–297, 302–322, 330–350, 373–393, 406–426, and 459–479; these read ALPE…DAAV, YLAY…FLTV, PLSD…LVYS, FFVL…ASHF, LTLY…VALQ, FVLG…VYGV, IPLV…LGAV, PTAM…AFVV, MLVI…IAQS, MFAY…LAGS, MFYV…ILLL, LAFV…TVGF, IGYV…AFYY, and LAVL…VQAI.

It belongs to the complex I subunit 2 family. NDH-1 is composed of 14 different subunits. Subunits NuoA, H, J, K, L, M, N constitute the membrane sector of the complex.

It is found in the cell inner membrane. The enzyme catalyses a quinone + NADH + 5 H(+)(in) = a quinol + NAD(+) + 4 H(+)(out). NDH-1 shuttles electrons from NADH, via FMN and iron-sulfur (Fe-S) centers, to quinones in the respiratory chain. The immediate electron acceptor for the enzyme in this species is believed to be ubiquinone. Couples the redox reaction to proton translocation (for every two electrons transferred, four hydrogen ions are translocated across the cytoplasmic membrane), and thus conserves the redox energy in a proton gradient. The chain is NADH-quinone oxidoreductase subunit N from Thiobacillus denitrificans (strain ATCC 25259 / T1).